The chain runs to 125 residues: Small ribosomal subunit protein uS12 (125 aa).

D89 carries the 3-methylthioaspartic acid modification. Residues 104–125 (LQGVKDRKQSRSKYGSKRPKKA) form a disordered region. Over residues 113–125 (SRSKYGSKRPKKA) the composition is skewed to basic residues.

This sequence belongs to the universal ribosomal protein uS12 family. In terms of assembly, part of the 30S ribosomal subunit. Contacts proteins S8 and S17. May interact with IF1 in the 30S initiation complex.

Its function is as follows. With S4 and S5 plays an important role in translational accuracy. Interacts with and stabilizes bases of the 16S rRNA that are involved in tRNA selection in the A site and with the mRNA backbone. Located at the interface of the 30S and 50S subunits, it traverses the body of the 30S subunit contacting proteins on the other side and probably holding the rRNA structure together. The combined cluster of proteins S8, S12 and S17 appears to hold together the shoulder and platform of the 30S subunit. The polypeptide is Small ribosomal subunit protein uS12 (Leptothrix cholodnii (strain ATCC 51168 / LMG 8142 / SP-6) (Leptothrix discophora (strain SP-6))).